The chain runs to 378 residues: MTYRPATDPPDLDTLTLGVEEEFLLLDSDTGESMPVAARVLDGLSGTAYEQSRREFRHSMVEMVTPVVSDLAELRRHLVALRTAAAEAAESAGAHLVAVGATPVNETHRTVPDEPRYHAMSRRFGPVAHDPAVCGCHVHVGLPDRELAVQVCNHLRPWLPVVQAITANSPLHDGQDTGHASWRAMQLERWPSIGPTPYFDSAADYDATVADLIKAGIMLDAGMVYWYVRPSAAFPTVEIRVGDVCPTVDDTVLVAALVRALVATLAADVRDGARATRIRGCLVSAAHWRAAHDGLDGDLVDLRTGHARPAWDLVDELFALVAPALERQGDRAYVLDQLARLRDEGTGAARQRRILERTGCDVRAVLAHLAAQTRPVPA.

This sequence belongs to the glutamate--cysteine ligase type 2 family. YbdK subfamily.

It catalyses the reaction L-cysteine + L-glutamate + ATP = gamma-L-glutamyl-L-cysteine + ADP + phosphate + H(+). Its function is as follows. ATP-dependent carboxylate-amine ligase which exhibits weak glutamate--cysteine ligase activity. This is Putative glutamate--cysteine ligase 2 from Salinispora tropica (strain ATCC BAA-916 / DSM 44818 / JCM 13857 / NBRC 105044 / CNB-440).